Consider the following 1442-residue polypeptide: Sulfite reductase [NADPH] subunit beta (1442 aa).

One can recognise a Flavodoxin-like domain in the interval 682–831 (LHVYYASDGG…AYSEWEPKLW (150 aa)). Ser-903 is modified (phosphoserine). The [4Fe-4S] cluster site is built by Cys-1300, Cys-1306, Cys-1345, and Cys-1349. Residue Cys-1349 coordinates siroheme.

It belongs to the nitrite and sulfite reductase 4Fe-4S domain family. In terms of assembly, alpha(2)-beta(2). The alpha component is a flavoprotein, the beta component is a hemoprotein. Siroheme serves as cofactor. The cofactor is [4Fe-4S] cluster.

Its subcellular location is the cytoplasm. The enzyme catalyses hydrogen sulfide + 3 NADP(+) + 3 H2O = sulfite + 3 NADPH + 4 H(+). It functions in the pathway sulfur metabolism; hydrogen sulfide biosynthesis; hydrogen sulfide from sulfite (NADPH route): step 1/1. Catalyzes the reduction of sulfite to sulfide, one of several activities required for the biosynthesis of L-cysteine from sulfate. This is Sulfite reductase [NADPH] subunit beta (MET5) from Saccharomyces cerevisiae (strain ATCC 204508 / S288c) (Baker's yeast).